Here is a 1138-residue protein sequence, read N- to C-terminus: Envelopment polyprotein (1138 aa).

Residues 1 to 18 (MEGWYLVVLGVCYTLTLA) form the signal peptide. Over 19 to 487 (MPKTIYELKM…CVPGLHGWAT (469 aa)) the chain is Lumenal. 11 disulfide bridges follow: Cys-30/Cys-155, Cys-64/Cys-161, Cys-113/Cys-132, Cys-137/Cys-142, Cys-179/Cys-189, Cys-214/Cys-250, Cys-239/Cys-354, Cys-379/Cys-438, Cys-383/Cys-392, Cys-408/Cys-427, and Cys-455/Cys-478. Asn-138 carries N-linked (GlcNAc...) asparagine; by host glycosylation. Asn-350 carries an N-linked (GlcNAc...) asparagine; by host glycan. The N-linked (GlcNAc...) asparagine; by host glycan is linked to Asn-402. A helical transmembrane segment spans residues 488–508 (VMLLSTFCFGWVLIPAVTLII). Residues 509–630 (LKCLRVLTFS…LGVFRYKSRC (122 aa)) lie on the Cytoplasmic side of the membrane. The segment at 519–536 (CSHYTNESKFKFILEKVK) is binding to the ribonucleoprotein. 2 consecutive CCHC-type zinc fingers follow at residues 548–568 (CDVC…RQSC) and 573–594 (CPYC…YSIC). 3 binding to the ribonucleoprotein regions span residues 591–608 (YSIC…KKSL), 595–606 (KLTGRFQEALKK), and 614–628 (KKGC…RYKS). The segment at 610 to 637 (KPEVKKGCYRTLGVFRYKSRCYVGLVWC) is interaction with host TRAF3. One can recognise an ITAM domain in the interval 614 to 637 (KKGCYRTLGVFRYKSRCYVGLVWC). A phosphotyrosine mark is found at Tyr-618 and Tyr-631. The YxxL signature appears at 618–621 (YRTL). Residues 631 to 651 (YVGLVWCLLLTCEIVIWAASA) traverse the membrane as a helical segment. At 652–1107 (ETPLMESGWS…EWLLGILNGN (456 aa)) the chain is on the lumenal side. Disulfide bonds link Cys-738–Cys-773, Cys-742–Cys-780, Cys-754–Cys-887, Cys-768–Cys-898, Cys-783–Cys-906, Cys-809–Cys-818, Cys-826–Cys-835, and Cys-866–Cys-870. Positions 760–780 (YQYETGWGCNPGDCPGVGTGC) are fusion loop. Asn-930 is a glycosylation site (N-linked (GlcNAc...) asparagine; by host). 5 cysteine pairs are disulfide-bonded: Cys-972/Cys-1002, Cys-995/Cys-1047, Cys-1012/Cys-1017, Cys-1048/Cys-1053, and Cys-1087/Cys-1091. The chain crosses the membrane as a helical span at residues 1108–1128 (WIVVVVLVVILILSIIMFSVL). The segment at 1124 to 1138 (MFSVLCPRRGHKKTV) is binding to the ribonucleoprotein. The Cytoplasmic portion of the chain corresponds to 1129–1138 (CPRRGHKKTV).

It belongs to the hantavirus envelope glycoprotein family. As to quaternary structure, homodimer. Homotetramer; forms heterotetrameric Gn-Gc spikes in the pre-fusion conformation. Interacts (via C-terminus) with the nucleoprotein. Interacts with host TUFM; this interaction contributes to the virus-induced degradation of mitochondria by autophagy, which leads to degradation of host MAVS and inhibition of type I interferon (IFN) responses. Interacts with host MAP1LC3B; this interaction contributes to the virus-induced degradation of mitochondria by autophagy, which leads to degradation of host MAVS and inhibition of type I interferon (IFN) responses. Interacts (via C-terminus) with host TRAF3; this interaction inhibits the formation of TRAF3-TBK1 complexes. In terms of assembly, homodimer. Homotetramer; forms heterotetrameric Gn-Gc spikes in the pre-fusion conformation. Homotrimer; forms homotrimer in the post-fusion conformation at acidic pH. Interacts (via C-terminus) with the nucleoprotein. In terms of processing, envelope polyprotein precursor is quickly cleaved in vivo just after synthesis, presumably by host signal peptidase.

It is found in the virion membrane. It localises to the host cell surface. Its subcellular location is the host Golgi apparatus membrane. The protein resides in the host endoplasmic reticulum membrane. The protein localises to the host mitochondrion. Forms homotetramers with glycoprotein C at the surface of the virion. Attaches the virion to host cell receptors including integrin ITGAV/ITGB3. This attachment induces virion internalization possibly through clathrin-dependent endocytosis and dynamin-independent macropinocytosis. Mediates the assembly and budding of infectious virus particles through its interaction with the nucleocapsid protein and the viral genome. May dysregulate normal immune and endothelial cell responses through an ITAM motif. Translocates to mitochondria, binds to host TUFM and recruits MAP1LC3B. These interactions induce mitochondrial autophagy and therefore destruction of host MAVS leading to inhibition of type I interferon (IFN) responses. Concomitant breakdown of glycoprotein N is apparently prevented by the nucleoprotein that may inhibit Gn-stimulated autophagosome-lysosome fusion. Interacts with the viral genomic RNA. Inhibits the host RIG-I/TBK1 pathway by disrupting the formation of TBK1-TRAF3 complexes and downstream signaling responses required for IFN-beta transcription. Its function is as follows. Forms homotetramers with glycoprotein N at the surface of the virion. Attaches the virion to host cell receptors including integrin ITGAV/ITGB3. This attachment induces virion internalization predominantly through clathrin-dependent endocytosis. Class II fusion protein that promotes fusion of viral membrane with host endosomal membrane after endocytosis of the virion. The protein is Envelopment polyprotein (GP) of Abrothrix longipilis (Long-haired grass mouse).